A 544-amino-acid polypeptide reads, in one-letter code: Serine/threonine-protein kinase PAK 1 (544 aa).

Residues 1–77 (MSNNGLDIQD…KEKERPEISL (77 aa)) form a disordered region. S2 is modified (N-acetylserine). Position 21 is a phosphoserine; by PKB and autocatalysis (S21). Basic and acidic residues predominate over residues 68–77 (KEKERPEISL). The segment at 70 to 140 (KERPEISLPS…YNSKKTSNSQ (71 aa)) is autoregulatory region. In terms of domain architecture, CRIB spans 75–88 (ISLPSDFEHTIHVG). The interval 75-105 (ISLPSDFEHTIHVGFDAVTGEFTGMPEQWAR) is GTPase-binding. Position 84 is a phosphothreonine; by OXSR1 (T84). Position 115 is a phosphoserine (S115). Y131 and Y142 each carry phosphotyrosine. S144 and S149 each carry phosphoserine; by autocatalysis. Y153 is subject to Phosphotyrosine; by JAK2. The interval 161–193 (VKAVSETPAVPPVSEDEDDDDDGTPPPVIAPRP) is disordered. A Phosphoserine modification is found at S174. Acidic residues predominate over residues 174 to 183 (SEDEDDDDDG). Phosphothreonine is present on T184. A Phosphoserine; by autocatalysis modification is found at S198. Y200 is subject to Phosphotyrosine; by JAK2. S203 bears the Phosphoserine; by autocatalysis mark. T211 and T218 each carry phosphothreonine. The tract at residues 212 to 250 (PTRDVATSPISPTENNTTPPDALTRNTEKQKKKPKMSDE) is disordered. Residues S219 and S222 each carry the phosphoserine modification. Over residues 219-230 (SPISPTENNTTP) the composition is skewed to polar residues. Phosphothreonine occurs at positions 224, 228, and 229. One can recognise a Protein kinase domain in the interval 269-520 (YTRFEKIGQG…AKELLQHQFL (252 aa)). 275–283 (IGQGASGTV) lines the ATP pocket. The residue at position 284 (Y284) is a Phosphotyrosine; by JAK2. K298 contributes to the ATP binding site. D388 (proton acceptor) is an active-site residue. At T422 the chain carries Phosphothreonine; by autocatalysis, BRSK2 and PDPK1.

It belongs to the protein kinase superfamily. STE Ser/Thr protein kinase family. STE20 subfamily. As to quaternary structure, homodimer in its autoinhibited state. Active as monomer. Interacts with GIT1. Component of cytoplasmic complexes, which also contains PXN, ARHGEF7 and GIT1. Interacts with NISCH. Interacts with DVL1; mediates the formation of a DVL1, MUSK and PAK1 ternary complex involved in AChR clustering. Binds to the caspase-cleaved p110 isoform of CDC2L1 and CDC2L2, p110C, but not the full-length proteins. Interacts with ARHGEF7. Interacts tightly with GTP-bound but not GDP-bound CDC42/P21 and RAC1. Probably found in a ternary complex composed of DSCAM, PAK1 and RAC1. Interacts with DSCAM (via cytoplasmic domain); the interaction is direct and enhanced in presence of RAC1. Interacts with SCRIB. Interacts with PDPK1. Interacts (via kinase domain) with RAF1. Interacts with NCK1 and NCK2. Interacts with TBCB. Interacts with BRSK2. Interacts with SNAI1. Interacts with CIB1 (via N-terminal region); the interaction is direct, promotes PAK1 activity and occurs in a calcium-dependent manner. Interacts with INPP5K. Interacts with gamma-tubulin. Interacts with RHOU; the interaction promotes PAK1 activation. Mg(2+) is required as a cofactor. Post-translationally, autophosphorylated in trans, meaning that in a dimer, one kinase molecule phosphorylates the other one. Activated by autophosphorylation at Thr-422 in response to a conformation change, triggered by interaction with GTP-bound CDC42 or RAC1. Activated by phosphorylation at Thr-422 by BRSK2 and by PDPK1. Phosphorylated by JAK2 in response to PRL; this increases PAK1 kinase activity. Phosphorylated at Ser-21 by PKB/AKT; this reduces interaction with NCK1 and association with focal adhesion sites. Upon DNA damage, phosphorylated at Thr-211 and translocates to the nucleoplasm. Phosphorylated at tyrosine residues, which can be enhanced by NTN1.

The protein resides in the cytoplasm. The protein localises to the cell junction. Its subcellular location is the focal adhesion. It is found in the cell projection. It localises to the lamellipodium. The protein resides in the cell membrane. The protein localises to the ruffle membrane. Its subcellular location is the invadopodium. It is found in the nucleus. It localises to the nucleoplasm. The protein resides in the chromosome. The protein localises to the cytoskeleton. Its subcellular location is the microtubule organizing center. It is found in the centrosome. It catalyses the reaction L-seryl-[protein] + ATP = O-phospho-L-seryl-[protein] + ADP + H(+). The enzyme catalyses L-threonyl-[protein] + ATP = O-phospho-L-threonyl-[protein] + ADP + H(+). With respect to regulation, phosphorylation of Thr-84 by OXSR1 inhibits activation. Activated by binding small G proteins. Binding of GTP-bound CDC42 or RAC1 to the autoregulatory region releases monomers from the autoinhibited dimer, and enables activation by phosphorylation of Thr-422. Functionally, protein kinase involved in intracellular signaling pathways downstream of integrins and receptor-type kinases that plays an important role in cytoskeleton dynamics, in cell adhesion, migration, proliferation, apoptosis, mitosis, and in vesicle-mediated transport processes. Can directly phosphorylate BAD and protects cells against apoptosis. Activated by interaction with CDC42 and RAC1. Functions as a GTPase effector that links the Rho-related GTPases CDC42 and RAC1 to the JNK MAP kinase pathway. Phosphorylates and activates MAP2K1, and thereby mediates activation of downstream MAP kinases. Involved in the reorganization of the actin cytoskeleton, actin stress fibers and of focal adhesion complexes. Phosphorylates the tubulin chaperone TBCB and thereby plays a role in the regulation of microtubule biogenesis and organization of the tubulin cytoskeleton. Plays a role in the regulation of insulin secretion in response to elevated glucose levels. Part of a ternary complex that contains PAK1, DVL1 and MUSK that is important for MUSK-dependent regulation of AChR clustering during the formation of the neuromuscular junction (NMJ). Activity is inhibited in cells undergoing apoptosis, potentially due to binding of CDC2L1 and CDC2L2. Phosphorylates MYL9/MLC2. Phosphorylates RAF1 at 'Ser-338' and 'Ser-339' resulting in: activation of RAF1, stimulation of RAF1 translocation to mitochondria, phosphorylation of BAD by RAF1, and RAF1 binding to BCL2. Phosphorylates SNAI1 at 'Ser-246' promoting its transcriptional repressor activity by increasing its accumulation in the nucleus. In podocytes, promotes NR3C2 nuclear localization. Required for atypical chemokine receptor ACKR2-induced phosphorylation of LIMK1 and cofilin (CFL1) and for the up-regulation of ACKR2 from endosomal compartment to cell membrane, increasing its efficiency in chemokine uptake and degradation. In synapses, seems to mediate the regulation of F-actin cluster formation performed by SHANK3, maybe through CFL1 phosphorylation and inactivation. Plays a role in RUFY3-mediated facilitating gastric cancer cells migration and invasion. In response to DNA damage, phosphorylates MORC2 which activates its ATPase activity and facilitates chromatin remodeling. In neurons, plays a crucial role in regulating GABA(A) receptor synaptic stability and hence GABAergic inhibitory synaptic transmission through its role in F-actin stabilization. In hippocampal neurons, necessary for the formation of dendritic spines and excitatory synapses; this function is dependent on kinase activity and may be exerted by the regulation of actomyosin contractility through the phosphorylation of myosin II regulatory light chain (MLC). Along with GIT1, positively regulates microtubule nucleation during interphase. Phosphorylates FXR1, promoting its localization to stress granules and activity. Phosphorylates ILK on 'Thr-173' and 'Ser-246', promoting nuclear export of ILK. This Bos taurus (Bovine) protein is Serine/threonine-protein kinase PAK 1.